Consider the following 937-residue polypeptide: Protein Niban 1 (937 aa).

Glycine 2 is lipidated: N-myristoyl glycine. Serine 578, serine 581, serine 595, serine 601, and serine 646 each carry phosphoserine. Polar residues predominate over residues 584-595 (DLKTSMGSNQAS). 2 disordered regions span residues 584–710 (DLKT…GSLR) and 724–891 (SAPE…LGGN). Low complexity predominate over residues 640–651 (ASISGSSPPSGE). Over residues 655-681 (VSVSGVDNSAGNPLSADNSAGPLSSHL) the composition is skewed to polar residues. Residues 688-701 (EPPKDEETAHKRPE) are compositionally biased toward basic and acidic residues. Residues serine 708 and serine 768 each carry the phosphoserine modification. 2 stretches are compositionally biased toward polar residues: residues 802 to 817 (PTSQ…NTSC) and 855 to 869 (VTVT…SSNP).

It belongs to the Niban family. As to expression, detected in brain, lung, spleen and skeletal muscle. Expressed in small renal tumors but not in normal kidney.

Its subcellular location is the cytoplasm. It is found in the membrane. Its function is as follows. Regulates phosphorylation of a number of proteins involved in translation regulation including EIF2A, EIF4EBP1 and RPS6KB1. May be involved in the endoplasmic reticulum stress response. The protein is Protein Niban 1 of Rattus norvegicus (Rat).